A 1334-amino-acid polypeptide reads, in one-letter code: Nck-associated protein 5-like (1334 aa).

Disordered regions lie at residues 1 to 28 (MSEAMDQPAGGPGNPRPGEGDDGSMEPG), 115 to 146 (LPQIPLTPLQPPSEPPASPSLSSTEGPAAPLP), 210 to 234 (TPWRPPGQGPGSPEPINGELCGPPQ), 266 to 316 (GEED…SPDT), and 349 to 711 (PLNG…MVPS). Residues 1 to 139 (MSEAMDQPAG…PASPSLSSTE (139 aa)) are mediates interaction with CDK5RAP2 and is required for homodimerization and microtubule bundle formation. Residues 28–106 (GTCQELLHRL…NQMLSALFQQ (79 aa)) adopt a coiled-coil conformation. Residues 122-132 (PLQPPSEPPAS) show a composition bias toward pro residues. Positions 358 to 372 (GQSSSPDQAPPQLSK) are enriched in polar residues. Ser-440, Ser-451, Ser-470, and Ser-477 each carry phosphoserine; by CDK1. A compositionally biased stretch (low complexity) spans 468–481 (SPSPGGPQLSPQLP). Residues 484-487 (SRIP) carry the (S/T)X(I/L)P motif 1 motif. A phosphoserine mark is found at Ser-493, Ser-496, and Ser-498. The span at 519-547 (LPTSPSPCYTTPDSTQLRPPQSALSTTLS) shows a compositional bias: polar residues. Ser-571 and Ser-577 each carry phosphoserine; by CDK1. The span at 638–649 (PGNSSKKPSQGS) shows a compositional bias: polar residues. A Phosphothreonine modification is found at Thr-659. The tract at residues 750–1146 (RVYSSHSMGA…SGTPSKNLPK (397 aa)) is mediates interaction with beta-tubulin and is required for microtubule bundle formation. Phosphoserine; by CDK1 is present on Ser-767. The interval 782-884 (LAGALCPQVP…EGLAPHSAIE (103 aa)) is disordered. Residues 810–825 (SPHSSPTKLPSKSPTK) show a composition bias toward low complexity. The short motif at 816–819 (TKLP) is the (S/T)X(I/L)P motif 2 element. A (S/T)X(I/L)P motif 3; required for interaction with MAPRE1 motif is present at residues 926 to 929 (SKLP). 3 disordered regions span residues 931–953 (LNRRTEATKNKEGAGGGSPLRRE), 986–1015 (KAYLSSRARPRPGGPAPGPNTGLGQVQGQL), and 1030–1183 (LNRV…VPGI). Over residues 933-942 (RRTEATKNKE) the composition is skewed to basic and acidic residues. Residues 956–994 (MEARKLEAESLNISKLMAKAEDLRRALEEEKAYLSSRAR) are a coiled coil. The span at 1033-1050 (VDGKELPSKSWREPKPEY) shows a compositional bias: basic and acidic residues. A compositionally biased stretch (low complexity) spans 1079–1090 (GCGKPPGKPSSE). Polar residues predominate over residues 1110–1122 (SHFTACGSLTRTL). Positions 1152–1167 (LDPPPGVPPARPPPLT) are enriched in pro residues. Residue Ser-1194 is modified to Phosphoserine. The segment covering 1197–1206 (AFPALLPAAP) has biased composition (low complexity). Residues 1197 to 1334 (AFPALLPAAP…DSLSSCGSQG (138 aa)) are disordered. A compositionally biased stretch (polar residues) spans 1235–1247 (TFPNTRAAGSSSD). Residues 1313–1334 (LETSESLSDSLYDSLSSCGSQG) are compositionally biased toward low complexity.

As to quaternary structure, homodimer. Interacts with CDK5RAP2. Interacts with MAPRE1. Interacts with beta-tubulin. CDK1/Cyclin B-dependent phosphorylation mediates its dissociation from centrosomes during mitosis.

Its subcellular location is the cytoplasm. It is found in the cytoskeleton. It localises to the microtubule organizing center. The protein resides in the centrosome. In terms of biological role, regulates microtubule organization and stabilization. Promotes microtubule growth and bundling formation and stabilizes microtubules by increasing intense acetylation of microtubules. Both tubulin-binding and homodimer formation are required for NCKAP5L-mediated microtubule bundle formation. The sequence is that of Nck-associated protein 5-like from Homo sapiens (Human).